The chain runs to 733 residues: Submandibular gland protein C (733 aa).

The signal sequence occupies residues 1-20; sequence MKLILLYLAVVLCFVGKARS. The segment at 48–91 is disordered; sequence KSSGGSKDYNLSDGGKSNSRKNLSPATGGSATQQSNLDDSHAPN. Asn57 carries N-linked (GlcNAc...) asparagine glycosylation. Residues 62–84 show a composition bias toward polar residues; sequence GKSNSRKNLSPATGGSATQQSNL. Asn141 and Asn187 each carry an N-linked (GlcNAc...) asparagine glycan. Disordered stretches follow at residues 172–204, 249–330, 369–450, and 496–733; these read GQQAAASGGSKHNVENSSLSTGSATSNKGADKP, LTED…NSSN, and SVTE…PSVA. The span at 186–199 shows a compositional bias: polar residues; it reads ENSSLSTGSATSNK. Over residues 256-270 the composition is skewed to low complexity; sequence TSTSASVSGDSSTSS. Residues 300–318 are compositionally biased toward polar residues; it reads GSKQNVEDSTLSTGSATSN. N-linked (GlcNAc...) asparagine glycosylation is present at Asn327. A compositionally biased stretch (low complexity) spans 376-390; that stretch reads TSTSASVSGDSSTSS. Positions 420-438 are enriched in polar residues; that stretch reads GSKQNVEDSTLSTGSATSN. N-linked (GlcNAc...) asparagine glycosylation is found at Asn447, Asn514, and Asn528. 2 stretches are compositionally biased toward polar residues: residues 496 to 516 and 525 to 535; these read SVTEASQSAERPNAQSSNNLS and NPTNGSSSASS. Residues 538–552 are compositionally biased toward basic and acidic residues; sequence KPYEEGMRKLLKFLE. 2 stretches are compositionally biased toward low complexity: residues 563 to 574 and 609 to 619; these read SVSGMSSESSRS and SSNSSTGSATS. The N-linked (GlcNAc...) asparagine glycan is linked to Asn611. Positions 654-665 are enriched in gly residues; the sequence is GFNGPEGVGENN. Low complexity predominate over residues 677–701; it reads GSKSDSGSHNLSSGSGSRSNVSTGG. N-linked (GlcNAc...) asparagine glycosylation is found at Asn686 and Asn696. The span at 722–733 shows a compositional bias: polar residues; that stretch reads TGKTQSGSPSVA.

Post-translationally, N-glycosylated. Detected in terminal tubule cells of the submandibular gland (at protein level). Expressed in submandibular salivary glands of 3-day-old males but not adults. Expression in adult submandibular glands is restricted to females. Isoform 5 is expressed in both 3-day-old and adult sublingual glands.

The protein resides in the secreted. The polypeptide is Submandibular gland protein C (Muc19) (Mus musculus (Mouse)).